The following is a 1059-amino-acid chain: Ubiquitin carboxyl-terminal hydrolase 36 (1059 aa).

Disordered regions lie at residues 24–49 (VGNG…DSEM) and 94–148 (SNNN…KPKR). Low complexity predominate over residues 94 to 123 (SNNNNSSSCNGSNFGNSKVVGANGHDNGNN). The segment covering 130-139 (QSESTQSGPS) has biased composition (polar residues). The USP domain occupies 171-479 (TGMINVGNTC…NAYIMFYELD (309 aa)). C180 serves as the catalytic Nucleophile. The Proton acceptor role is filled by H438. The interval 505 to 673 (TVSSSSPTHT…KTPLKSSVKT (169 aa)) is disordered. Phosphoserine occurs at positions 508 and 510. A compositionally biased stretch (polar residues) spans 528–539 (GYSNGHATGSSN). Low complexity-rich tracts occupy residues 540–560 (AQKT…NGLQ), 592–611 (NGNK…KSVN), and 633–647 (ATAT…RPTA). Residues 655 to 664 (MTEDSSDKPK) show a composition bias toward basic and acidic residues. A phosphothreonine mark is found at T673 and T682. 3 disordered regions span residues 687-893 (LVPY…EAST), 926-998 (KELV…RYHN), and 1012-1059 (KYNR…QSSS). 2 positions are modified to phosphoserine: S692 and S694. Low complexity-rich tracts occupy residues 729–739 (TKTNGGSLTNG) and 752–765 (SSSS…ASAA). S766 carries the phosphoserine modification. Residues 766–776 (SDDEDADEEEE) are compositionally biased toward acidic residues. A compositionally biased stretch (polar residues) spans 779-795 (KLTNGWQPQKQSQSLTQ). The span at 799 to 808 (PPSPKTPPSP) shows a compositional bias: pro residues. Residue S801 is modified to Phosphoserine. T804 carries the post-translational modification Phosphothreonine. S807 carries the phosphoserine modification. Over residues 825 to 839 (DNEDEDDDDDEDEEE) the composition is skewed to acidic residues. Polar residues-rich tracts occupy residues 842 to 862 (QVVS…STTP) and 876 to 893 (KSQQ…EAST). A phosphothreonine mark is found at T846 and T861. The segment covering 926–940 (KELVAEAREQRQHDH) has biased composition (basic and acidic residues). Over residues 1048 to 1059 (QQQQQQSQQSSS) the composition is skewed to low complexity.

It belongs to the peptidase C19 family. Interacts with atms/PAF1, but not with CycT.

The protein localises to the nucleus. It is found in the nucleolus. The catalysed reaction is Thiol-dependent hydrolysis of ester, thioester, amide, peptide and isopeptide bonds formed by the C-terminal Gly of ubiquitin (a 76-residue protein attached to proteins as an intracellular targeting signal).. Functionally, required for maintaining multiple types of adult stem cells, including male and female germline, epithelial follicle cell and intestinal stem cells. May function as a transcriptional repressor by continually deubiquiting histone H2B at the promoters of genes critical for cellular differentiation, thereby preventing histone H3 'Lys-4' trimethylation (H3K4). Controls selective autophagy activation by ubiquitinated proteins. The sequence is that of Ubiquitin carboxyl-terminal hydrolase 36 (Usp36) from Drosophila pseudoobscura pseudoobscura (Fruit fly).